The chain runs to 78 residues: MSDIAERVKKIVAEQMGVDLDKVTDDAKFVEDLGADSLDNVELVMAFEEEFGCEIPDETAEKITSVSDAIKYIGENME.

The 76-residue stretch at Ser2–Met77 folds into the Carrier domain. Ser37 carries the O-(pantetheine 4'-phosphoryl)serine modification.

The protein belongs to the acyl carrier protein (ACP) family. Post-translationally, 4'-phosphopantetheine is transferred from CoA to a specific serine of apo-ACP by AcpS. This modification is essential for activity because fatty acids are bound in thioester linkage to the sulfhydryl of the prosthetic group.

Its subcellular location is the cytoplasm. It participates in lipid metabolism; fatty acid biosynthesis. In terms of biological role, carrier of the growing fatty acid chain in fatty acid biosynthesis. In Magnetococcus marinus (strain ATCC BAA-1437 / JCM 17883 / MC-1), this protein is Acyl carrier protein.